Consider the following 201-residue polypeptide: MYIGRFLVLGKTEEGYPFVTYRVSSRSFPNRVAKVMDDNTVAILPKELEEMFKNPYITYNCVKLVGDVAVATNGSHTDIIADKIKLGLPIRDALSYSLLTMDYEKDDYNTPRIAVVLTKDSAYMGYVTDSDVRIKKVELEAGKAYYLAVYEACNITKHQEISVTGKTAEEVTKFVMDYEKFEKPVTAATVLVKDGFKLATL.

Belongs to the archaeal IMP cyclohydrolase family.

It catalyses the reaction IMP + H2O = 5-formamido-1-(5-phospho-D-ribosyl)imidazole-4-carboxamide. Its pathway is purine metabolism; IMP biosynthesis via de novo pathway; IMP from 5-formamido-1-(5-phospho-D-ribosyl)imidazole-4-carboxamide: step 1/1. In terms of biological role, catalyzes the cyclization of 5-formylamidoimidazole-4-carboxamide ribonucleotide to IMP. This Methanococcus maripaludis (strain C6 / ATCC BAA-1332) protein is IMP cyclohydrolase.